We begin with the raw amino-acid sequence, 255 residues long: MVDRVAALCNYNVLEVVFSYLDLNDLGRCSQVCKSWFHFLNDENSDVWRFHCLNKLPKEVTKSELLSPVPTYKTKLRAFFHSWNPSDCSRNVYIKPNGFTLHRNPVAQSTDAARAKIGFRHGRHAWEVIWEGPLGTVAVIGISTKEAALQCHGYVALLGSDDQSWGWNLVENHLLHNGDMQGGYPLLNNAPKYQVGERIRVILDCDDNTLSFEKNYEFLGVAFRGLPDKKLFPTVSAVYGNTEVSMVYCGTPLDG.

Residues 3–51 (DRVAALCNYNVLEVVFSYLDLNDLGRCSQVCKSWFHFLNDENSDVWRFH) form the F-box domain. Residues 61–253 (TKSELLSPVP…VSMVYCGTPL (193 aa)) enclose the B30.2/SPRY domain.

This sequence belongs to the FBXO45/Fsn family. Component of an E3 ubiquitin ligase complex composed of hiw and Fsn.

The protein resides in the synapse. The protein operates within protein modification; protein ubiquitination. In terms of biological role, required in the presynaptic motoneuron to down-regulate the levels of wnd and restrain synaptic terminal growth at the neuromuscular junction (NMJ). The polypeptide is F-box/SPRY domain-containing protein 1 (Drosophila persimilis (Fruit fly)).